Reading from the N-terminus, the 245-residue chain is LOB domain-containing protein 16 (245 aa).

An LOB domain is found at 14 to 116; the sequence is SPCGACKFLR…SQVMQMKAQI (103 aa). The interval 162–183 is disordered; sequence YYGHVNPNNPVSPQSSLEESFS.

The protein belongs to the LOB domain-containing protein family. In terms of assembly, homodimer and heterodimer with LBD18. As to expression, expressed in roots and faintly in shoots.

It is found in the nucleus. Transcriptional activator. Involved in lateral root formation. Regulated by the transcriptional activators ARF7 and ARF19. Functions in the initiation and emergence of lateral roots, in conjunction with LBD18, downstream of ARF7 and ARF19. Acts downstream of the auxin influx carriers AUX1 and LAX1 in the regulation of lateral root initiation and development. This is LOB domain-containing protein 16 (LBD16) from Arabidopsis thaliana (Mouse-ear cress).